The following is a 655-amino-acid chain: Probable alpha-galactosidase D (655 aa).

The N-terminal stretch at 1 to 16 is a signal peptide; it reads MASVIALSLLLPAAFA. Residues Asn-87 and Asn-93 are each glycosylated (N-linked (GlcNAc...) asparagine). Cys-126 and Cys-153 are joined by a disulfide. Catalysis depends on Asp-151, which acts as the Nucleophile. 196–200 provides a ligand contact to substrate; it reads EWGID. Asp-218 acts as the Proton donor in catalysis. Residues Asn-432, Asn-482, Asn-502, Asn-540, and Asn-579 are each glycosylated (N-linked (GlcNAc...) asparagine).

The protein belongs to the glycosyl hydrolase 27 family.

The protein localises to the secreted. The catalysed reaction is Hydrolysis of terminal, non-reducing alpha-D-galactose residues in alpha-D-galactosides, including galactose oligosaccharides, galactomannans and galactolipids.. Functionally, hydrolyzes a variety of simple alpha-D-galactoside as well as more complex molecules such as oligosaccharides and polysaccharides. The chain is Probable alpha-galactosidase D (aglD) from Aspergillus terreus (strain NIH 2624 / FGSC A1156).